Consider the following 170-residue polypeptide: Adenine phosphoribosyltransferase (170 aa).

The protein belongs to the purine/pyrimidine phosphoribosyltransferase family. Homodimer.

Its subcellular location is the cytoplasm. The enzyme catalyses AMP + diphosphate = 5-phospho-alpha-D-ribose 1-diphosphate + adenine. The protein operates within purine metabolism; AMP biosynthesis via salvage pathway; AMP from adenine: step 1/1. Its function is as follows. Catalyzes a salvage reaction resulting in the formation of AMP, that is energically less costly than de novo synthesis. The sequence is that of Adenine phosphoribosyltransferase from Thermotoga neapolitana (strain ATCC 49049 / DSM 4359 / NBRC 107923 / NS-E).